A 289-amino-acid polypeptide reads, in one-letter code: Elongation factor Ts (289 aa).

Residues 82–85 form an involved in Mg(2+) ion dislocation from EF-Tu region; sequence TDFL.

The protein belongs to the EF-Ts family.

Its subcellular location is the cytoplasm. Associates with the EF-Tu.GDP complex and induces the exchange of GDP to GTP. It remains bound to the aminoacyl-tRNA.EF-Tu.GTP complex up to the GTP hydrolysis stage on the ribosome. The sequence is that of Elongation factor Ts from Pseudomonas aeruginosa (strain LESB58).